A 426-amino-acid chain; its full sequence is Glutamate-1-semialdehyde 2,1-aminomutase (426 aa).

N6-(pyridoxal phosphate)lysine is present on K265.

This sequence belongs to the class-III pyridoxal-phosphate-dependent aminotransferase family. HemL subfamily. In terms of assembly, homodimer. The cofactor is pyridoxal 5'-phosphate.

It localises to the cytoplasm. It catalyses the reaction (S)-4-amino-5-oxopentanoate = 5-aminolevulinate. The protein operates within porphyrin-containing compound metabolism; protoporphyrin-IX biosynthesis; 5-aminolevulinate from L-glutamyl-tRNA(Glu): step 2/2. This Klebsiella pneumoniae subsp. pneumoniae (strain ATCC 700721 / MGH 78578) protein is Glutamate-1-semialdehyde 2,1-aminomutase.